A 203-amino-acid chain; its full sequence is Outer-membrane lipoprotein carrier protein (203 aa).

The N-terminal stretch at 1 to 21 (MKKMAIACALLSSVVASSVWA) is a signal peptide. The tract at residues 178 to 203 (QQNGAVEPSKFTFTPPQGVTIDDQRK) is disordered.

It belongs to the LolA family. In terms of assembly, monomer.

The protein resides in the periplasm. Its function is as follows. Participates in the translocation of lipoproteins from the inner membrane to the outer membrane. Only forms a complex with a lipoprotein if the residue after the N-terminal Cys is not an aspartate (The Asp acts as a targeting signal to indicate that the lipoprotein should stay in the inner membrane). This Salmonella typhi protein is Outer-membrane lipoprotein carrier protein.